The sequence spans 111 residues: uncharacterized protein (111 aa).

The protein localises to the cytoplasm. It is found in the nucleus. This is an uncharacterized protein from Saccharomyces cerevisiae (strain ATCC 204508 / S288c) (Baker's yeast).